We begin with the raw amino-acid sequence, 137 residues long: Nuclear transition protein 2 (137 aa).

The segment covering 1 to 21 has biased composition (polar residues); the sequence is MDTKTQSLPNAHTQPHSNSGP. The tract at residues 1–137 is disordered; that stretch reads MDTKTQSLPN…KRRSSGRKYN (137 aa). 7 residues coordinate Zn(2+): histidine 12, histidine 16, histidine 24, cysteine 29, cysteine 31, cysteine 35, and cysteine 38. Over residues 22–74 the composition is skewed to low complexity; the sequence is QSHACNQCSCSHHCQNCSQSCDRSQSCSRSRSSSQSPTGHRSLPGHQSQSLSP. A compositionally biased stretch (basic residues) spans 78 to 91; sequence PRHRKRAMHSHRCP. The Nuclear localization signal motif lies at 110–118; it reads GKANKRKGI. Residues 126–137 show a composition bias toward basic residues; the sequence is KTKRRSSGRKYN. Serine 132 carries the post-translational modification Phosphoserine.

This sequence belongs to the nuclear transition protein 2 family. As to expression, testis. Expression is restricted to haploid germ cells.

The protein resides in the nucleus. Its subcellular location is the nucleolus. The protein localises to the chromosome. In terms of biological role, plays a key role in the replacement of histones to protamine in the elongating spermatids of mammals. In condensing spermatids, loaded onto the nucleosomes, where it promotes the recruitment and processing of protamines, which are responsible for histone eviction. The protein is Nuclear transition protein 2 (TNP2) of Sus scrofa (Pig).